A 70-amino-acid chain; its full sequence is uncharacterized protein (70 aa).

A helical transmembrane segment spans residues F50–I70.

It belongs to the M.jannaschii MJ0023/MJ0349/MJ1072/MJ1074/MJ1107/MJECL16 family.

The protein resides in the membrane. This is an uncharacterized protein from Methanocaldococcus jannaschii (strain ATCC 43067 / DSM 2661 / JAL-1 / JCM 10045 / NBRC 100440) (Methanococcus jannaschii).